Here is a 37-residue protein sequence, read N- to C-terminus: Large ribosomal subunit protein bL36A (37 aa).

Belongs to the bacterial ribosomal protein bL36 family.

This Clavibacter sepedonicus (Clavibacter michiganensis subsp. sepedonicus) protein is Large ribosomal subunit protein bL36A.